Consider the following 321-residue polypeptide: UDP-N-acetyl-alpha-D-glucosaminuronate decarboxylase (321 aa).

NAD(+) is bound by residues G12, F13, I14, D33, N34, Y36, G38, L76, T95, A117, Y148, and K152. Catalysis depends on Y148, which acts as the Proton acceptor.

Belongs to the NAD(P)-dependent epimerase/dehydratase family. As to quaternary structure, homodimer. The cofactor is NAD(+).

It catalyses the reaction UDP-2-acetamido-2-deoxy-alpha-D-glucuronate + H(+) = UDP-N-acetyl-alpha-D-xylosamine + CO2. Activity is completely inhibited by NADH but not by NADPH. In terms of biological role, decarboxylase involved in the biosynthesis of the nucleotide-sugar UDP-N-acetylxylosamine (UDP-XylNAc). Catalyzes the NAD-dependent decarboxylation of UDP-N-acetylglucosaminuronic acid (UDP-GlcNAcA) to UDP-XylNAc. Cannot use other UDP-uronates, such as UDP-glucuronic acid (UDP-GlcA) and UDP-galacturonic acid (UDP-GalA). The chain is UDP-N-acetyl-alpha-D-glucosaminuronate decarboxylase from Bacillus cytotoxicus (strain DSM 22905 / CIP 110041 / 391-98 / NVH 391-98).